The following is a 686-amino-acid chain: Asparagine-rich protein (686 aa).

The N-terminal stretch at 1–18 (MKGTSALLLIGFFHATIS) is a signal peptide. 3 disordered regions span residues 34-73 (KRGNLNTGGQITSNSAILGDVNAGSKLSEPPKRRNTDKTA), 125-148 (SLTSDTKTTTRTSQTSSTRASSSI), and 201-236 (ITRQKSENTQGNSIVRNGGTNSLNIPSSTRRSQPPN). A compositionally biased stretch (polar residues) spans 37-49 (NLNTGGQITSNSA). Positions 62–73 (EPPKRRNTDKTA) are enriched in basic and acidic residues.

In terms of tissue distribution, prismatic layer of shell (at protein level). Expressed primarily in the mantle with highest level in the mantle edge and lower level in the mantle pallium.

Its subcellular location is the secreted. This chain is Asparagine-rich protein, found in Margaritifera margaritifera (Freshwater pearl mussel).